A 285-amino-acid chain; its full sequence is NAD kinase (285 aa).

The Proton acceptor role is filled by Asp68. NAD(+) is bound by residues 68–69 (DG), 142–143 (ND), Arg153, Lys170, Asp172, and Gln242.

It belongs to the NAD kinase family. A divalent metal cation serves as cofactor.

It localises to the cytoplasm. It catalyses the reaction NAD(+) + ATP = ADP + NADP(+) + H(+). Involved in the regulation of the intracellular balance of NAD and NADP, and is a key enzyme in the biosynthesis of NADP. Catalyzes specifically the phosphorylation on 2'-hydroxyl of the adenosine moiety of NAD to yield NADP. The sequence is that of NAD kinase from Koribacter versatilis (strain Ellin345).